The following is a 351-amino-acid chain: Phosphoribosylformylglycinamidine cyclo-ligase (351 aa).

It belongs to the AIR synthase family.

It localises to the cytoplasm. The enzyme catalyses 2-formamido-N(1)-(5-O-phospho-beta-D-ribosyl)acetamidine + ATP = 5-amino-1-(5-phospho-beta-D-ribosyl)imidazole + ADP + phosphate + H(+). Its pathway is purine metabolism; IMP biosynthesis via de novo pathway; 5-amino-1-(5-phospho-D-ribosyl)imidazole from N(2)-formyl-N(1)-(5-phospho-D-ribosyl)glycinamide: step 2/2. The polypeptide is Phosphoribosylformylglycinamidine cyclo-ligase (Xylella fastidiosa (strain Temecula1 / ATCC 700964)).